The primary structure comprises 535 residues: High affinity immunoglobulin alpha and immunoglobulin mu Fc receptor (535 aa).

The N-terminal stretch at 1–35 (MDQGAPAKPSEQKVPSLRTRWEILLLTLCLLHGSS) is a signal peptide. Over 36 to 455 (MTPPHRRSHS…ALMEGESHTR (420 aa)) the chain is Extracellular. The mediates immunoglobulin Fc fragment-binding stretch occupies residues 95–117 (GGAVTIHCHYAPSSVNRHQRKYW). Residues 95-189 (GGAVTIHCHY…DMLFFSVNLT (95 aa)) form the Ig-like V-type domain. An intrachain disulfide couples cysteine 102 to cysteine 173. N-linked (GlcNAc...) asparagine glycosylation is present at asparagine 187. Disordered regions lie at residues 201 to 360 (AAPA…LISE) and 405 to 430 (EGRS…QLSV). Low complexity-rich tracts occupy residues 208-220 (PTTA…SSAG) and 241-253 (TVPT…TTSS). The segment covering 291–328 (KSRSMSSTTQGVWLWSTRNSVTPSVTTSEGRRQGTTPE) has biased composition (polar residues). The span at 330–346 (DGPRDETDVRVSPEAPR) shows a compositional bias: basic and acidic residues. The span at 413–429 (LENTTEESSPPTPSQLS) shows a compositional bias: polar residues. The chain crosses the membrane as a helical span at residues 456–476 (ILTPVSTVLALLLIAALILLK). Over 477 to 535 (RSLGRQRTSQKKERVPRITLIQMTHFLPDKLPDEGKNFQQSNLLPPQASLTVLENDPRP) the chain is Cytoplasmic. The disordered stretch occupies residues 507–535 (LPDEGKNFQQSNLLPPQASLTVLENDPRP). Residues 513–528 (NFQQSNLLPPQASLTV) show a composition bias toward polar residues.

As to quaternary structure, interacts with IGHM; this interaction facilitates the endocytosis of IgM-coated microbes and IgM-antigen immune complexes. Post-translationally, N-glycosylated. As to expression, expressed in several tissues including thymus, spleen, liver, kidney, small and large intestine, testis and placenta. Expressed by oligodendrocytes, B-cells and macrophages but not granulocytes, T-cells or NK cells (at protein level).

The protein resides in the cell membrane. Its function is as follows. Functions as a receptor for the Fc fragment of IgA and IgM. Binds IgA and IgM with high affinity and mediates their endocytosis. May function in the immune response to microbes mediated by IgA and IgM. This Mus musculus (Mouse) protein is High affinity immunoglobulin alpha and immunoglobulin mu Fc receptor (Fcamr).